Consider the following 352-residue polypeptide: tRNA pseudouridine synthase D (352 aa).

The Nucleophile role is filled by aspartate 81. In terms of domain architecture, TRUD spans 157 to 303; it reads GVPNYFGTQR…MDHERRILRL (147 aa).

The protein belongs to the pseudouridine synthase TruD family.

The enzyme catalyses uridine(13) in tRNA = pseudouridine(13) in tRNA. Its function is as follows. Responsible for synthesis of pseudouridine from uracil-13 in transfer RNAs. This is tRNA pseudouridine synthase D from Pseudomonas putida (strain ATCC 47054 / DSM 6125 / CFBP 8728 / NCIMB 11950 / KT2440).